We begin with the raw amino-acid sequence, 463 residues long: Cytochrome c-552 (463 aa).

The N-terminal stretch at 1 to 23 (MNVKSIALSAVIATSFLAAGAMA) is a signal peptide. H83 lines the heme c pocket. 3 residues coordinate heme: C111, C114, and K115. Heme c-binding residues include C149, C152, H153, C191, C194, and H195. Residues E197, Y198, K246, and Q248 each contribute to the Ca(2+) site. Y198 is a substrate binding site. Residue H249 participates in substrate binding. The heme c site is built by H260, C267, C270, H271, H286, C299, C302, H303, and H378.

Belongs to the cytochrome c-552 family. It depends on Ca(2+) as a cofactor. Requires heme c as cofactor.

The protein resides in the periplasm. The enzyme catalyses 6 Fe(III)-[cytochrome c] + NH4(+) + 2 H2O = 6 Fe(II)-[cytochrome c] + nitrite + 8 H(+). The protein operates within nitrogen metabolism; nitrate reduction (assimilation). Functionally, catalyzes the reduction of nitrite to ammonia, consuming six electrons in the process. The sequence is that of Cytochrome c-552 from Shewanella frigidimarina (strain NCIMB 400).